A 298-amino-acid polypeptide reads, in one-letter code: Protease HtpX homolog (298 aa).

2 consecutive transmembrane segments (helical) span residues leucine 15 to phenylalanine 35 and proline 39 to glutamine 59. Histidine 143 is a Zn(2+) binding site. Glutamate 144 is a catalytic residue. Residue histidine 147 participates in Zn(2+) binding. The next 2 membrane-spanning stretches (helical) occupy residues isoleucine 153–alanine 173 and methionine 197–leucine 217. Glutamate 227 provides a ligand contact to Zn(2+).

It belongs to the peptidase M48B family. It depends on Zn(2+) as a cofactor.

It localises to the cell membrane. The protein is Protease HtpX homolog of Lactobacillus helveticus (strain DPC 4571).